The following is a 423-amino-acid chain: Adenylosuccinate synthetase (423 aa).

GTP is bound by residues 12 to 18 (GDEGKGK) and 40 to 42 (GHT). Aspartate 13 (proton acceptor) is an active-site residue. Residues aspartate 13 and glycine 40 each coordinate Mg(2+). IMP contacts are provided by residues 13–16 (DEGK), 38–41 (NAGH), threonine 128, arginine 142, glutamine 223, threonine 238, and arginine 302. Histidine 41 serves as the catalytic Proton donor. 298–304 (TTTGRPR) contributes to the substrate binding site. Residues arginine 304, 330–332 (RLD), and 412–414 (CIG) contribute to the GTP site.

This sequence belongs to the adenylosuccinate synthetase family. As to quaternary structure, homodimer. Mg(2+) serves as cofactor.

It is found in the cytoplasm. It carries out the reaction IMP + L-aspartate + GTP = N(6)-(1,2-dicarboxyethyl)-AMP + GDP + phosphate + 2 H(+). Its pathway is purine metabolism; AMP biosynthesis via de novo pathway; AMP from IMP: step 1/2. In terms of biological role, plays an important role in the de novo pathway of purine nucleotide biosynthesis. Catalyzes the first committed step in the biosynthesis of AMP from IMP. The protein is Adenylosuccinate synthetase of Dehalococcoides mccartyi (strain ATCC BAA-2100 / JCM 16839 / KCTC 5957 / BAV1).